Reading from the N-terminus, the 294-residue chain is 4-hydroxy-tetrahydrodipicolinate synthase (294 aa).

T47 contacts pyruvate. The Proton donor/acceptor role is filled by Y135. The active-site Schiff-base intermediate with substrate is K163. T205 provides a ligand contact to pyruvate.

Belongs to the DapA family. In terms of assembly, homotetramer; dimer of dimers.

The protein localises to the cytoplasm. It catalyses the reaction L-aspartate 4-semialdehyde + pyruvate = (2S,4S)-4-hydroxy-2,3,4,5-tetrahydrodipicolinate + H2O + H(+). It functions in the pathway amino-acid biosynthesis; L-lysine biosynthesis via DAP pathway; (S)-tetrahydrodipicolinate from L-aspartate: step 3/4. In terms of biological role, catalyzes the condensation of (S)-aspartate-beta-semialdehyde [(S)-ASA] and pyruvate to 4-hydroxy-tetrahydrodipicolinate (HTPA). This is 4-hydroxy-tetrahydrodipicolinate synthase from Rickettsia montanensis.